A 167-amino-acid polypeptide reads, in one-letter code: Crossover junction endodeoxyribonuclease RuvC (167 aa).

Catalysis depends on residues Asp-7, Glu-67, and Asp-140. Mg(2+) contacts are provided by Asp-7, Glu-67, and Asp-140.

The protein belongs to the RuvC family. In terms of assembly, homodimer which binds Holliday junction (HJ) DNA. The HJ becomes 2-fold symmetrical on binding to RuvC with unstacked arms; it has a different conformation from HJ DNA in complex with RuvA. In the full resolvosome a probable DNA-RuvA(4)-RuvB(12)-RuvC(2) complex forms which resolves the HJ. The cofactor is Mg(2+).

It is found in the cytoplasm. The catalysed reaction is Endonucleolytic cleavage at a junction such as a reciprocal single-stranded crossover between two homologous DNA duplexes (Holliday junction).. The RuvA-RuvB-RuvC complex processes Holliday junction (HJ) DNA during genetic recombination and DNA repair. Endonuclease that resolves HJ intermediates. Cleaves cruciform DNA by making single-stranded nicks across the HJ at symmetrical positions within the homologous arms, yielding a 5'-phosphate and a 3'-hydroxyl group; requires a central core of homology in the junction. The consensus cleavage sequence is 5'-(A/T)TT(C/G)-3'. Cleavage occurs on the 3'-side of the TT dinucleotide at the point of strand exchange. HJ branch migration catalyzed by RuvA-RuvB allows RuvC to scan DNA until it finds its consensus sequence, where it cleaves and resolves the cruciform DNA. This chain is Crossover junction endodeoxyribonuclease RuvC, found in Moorella thermoacetica (strain ATCC 39073 / JCM 9320).